Reading from the N-terminus, the 688-residue chain is Potassium-transporting ATPase ATP-binding subunit (688 aa).

A run of 4 helical transmembrane segments spans residues 34 to 54 (PVMF…LAIL), 62 to 82 (AMFT…ANMA), 219 to 239 (VALT…TATL), and 260 to 280 (VLVA…LSAI). Residue Asp-313 is the 4-aspartylphosphate intermediate of the active site. ATP is bound by residues Asp-350, Glu-354, 383 to 390 (FSAQTRMS), and Lys-401. 2 residues coordinate Mg(2+): Asp-524 and Asp-528. 3 consecutive transmembrane segments (helical) span residues 594 to 614 (FAII…LNIM), 622 to 642 (AILS…PLAL), and 662 to 682 (IYGL…DLLL).

This sequence belongs to the cation transport ATPase (P-type) (TC 3.A.3) family. Type IA subfamily. As to quaternary structure, the system is composed of three essential subunits: KdpA, KdpB and KdpC.

Its subcellular location is the cell inner membrane. The catalysed reaction is K(+)(out) + ATP + H2O = K(+)(in) + ADP + phosphate + H(+). Part of the high-affinity ATP-driven potassium transport (or Kdp) system, which catalyzes the hydrolysis of ATP coupled with the electrogenic transport of potassium into the cytoplasm. This subunit is responsible for energy coupling to the transport system and for the release of the potassium ions to the cytoplasm. This chain is Potassium-transporting ATPase ATP-binding subunit, found in Yersinia pseudotuberculosis serotype O:1b (strain IP 31758).